The following is a 206-amino-acid chain: Large ribosomal subunit protein uL3 (206 aa).

Belongs to the universal ribosomal protein uL3 family. In terms of assembly, part of the 50S ribosomal subunit. Forms a cluster with proteins L14 and L19.

One of the primary rRNA binding proteins, it binds directly near the 3'-end of the 23S rRNA, where it nucleates assembly of the 50S subunit. The polypeptide is Large ribosomal subunit protein uL3 (Cytophaga hutchinsonii (strain ATCC 33406 / DSM 1761 / CIP 103989 / NBRC 15051 / NCIMB 9469 / D465)).